The following is a 341-amino-acid chain: Phosphate acyltransferase (341 aa).

This sequence belongs to the PlsX family. Homodimer. Probably interacts with PlsY.

The protein resides in the cytoplasm. It carries out the reaction a fatty acyl-[ACP] + phosphate = an acyl phosphate + holo-[ACP]. It functions in the pathway lipid metabolism; phospholipid metabolism. Catalyzes the reversible formation of acyl-phosphate (acyl-PO(4)) from acyl-[acyl-carrier-protein] (acyl-ACP). This enzyme utilizes acyl-ACP as fatty acyl donor, but not acyl-CoA. This chain is Phosphate acyltransferase, found in Aliivibrio salmonicida (strain LFI1238) (Vibrio salmonicida (strain LFI1238)).